Here is a 316-residue protein sequence, read N- to C-terminus: Cuticle collagen 12 (316 aa).

Positions 1–36 (MTEDPKQIAQETESLRKVAFFGIAVSTIATLTAIIA) are cleaved as a signal peptide. 2 stretches are compositionally biased toward low complexity: residues 127–157 (SGAAGPAGSPGQDGAPGNDGAPGAPGNPGQD) and 183–204 (APGQKGPSGAPGAPGQSGGAAL). A disordered region spans residues 127–316 (SGAAGPAGSP…CPPPRTAPGY (190 aa)). Triple-helical region regions lie at residues 128–157 (GAAGPAGSPGQDGAPGNDGAPGAPGNPGQD), 176–202 (GPPGPSGAPGQKGPSGAPGAPGQSGGA), 206–235 (GPPGPAGPPGPAGQPGSNGNAGAPGAPGQV), 240–266 (GTPGPAGPPGSPGPAGAPGQPGQAGSS), and 269–304 (GGPGPQGDAGAPGAPGAPGQAGAPGQDGESGSEGAC). Residues 205-217 (PGPPGPAGPPGPA) are compositionally biased toward pro residues. Positions 219–234 (QPGSNGNAGAPGAPGQ) are enriched in low complexity. Residues 241–251 (TPGPAGPPGSP) are compositionally biased toward pro residues. Low complexity-rich tracts occupy residues 256 to 266 (APGQPGQAGSS) and 276 to 295 (DAGAPGAPGAPGQAGAPGQD). Residues 307–316 (CPPPRTAPGY) show a composition bias toward pro residues.

The protein belongs to the cuticular collagen family. In terms of assembly, collagen polypeptide chains are complexed within the cuticle by disulfide bonds and other types of covalent cross-links.

Nematode cuticles are composed largely of collagen-like proteins. The cuticle functions both as an exoskeleton and as a barrier to protect the worm from its environment. The protein is Cuticle collagen 12 (col-12) of Caenorhabditis elegans.